Reading from the N-terminus, the 414-residue chain is NADH-dependent flavin oxidoreductase iccE (414 aa).

Residues 25–28 (TAIA) and glutamine 107 each bind FMN. Substrate is bound at residue 188–191 (HASH). Residue 347–348 (AR) coordinates FMN.

It belongs to the NADH:flavin oxidoreductase/NADH oxidase family.

The enzyme catalyses 8-epi-ilicicolin H = ilicicolin H. Its pathway is mycotoxin biosynthesis. NADH-dependent flavin oxidoreductase; part of the gene cluster that mediates the biosynthesis of ilicicolin H, a 4-hydroxy-2-pyridonealkaloid that has potent and broad antifungal activities by inhibiting the mitochondrial respiration chain. IccE acts as an epimerase and catalyzes the conversion of 8-epi-ilicicolin H into the final product ilicicolin H. The biosynthesis of ilicicolin H starts with formation of the tetramic acid by the hybrid PKS-NRPS synthetase iccA with the partnering trans-enoyl reductase iccB since iccA lacks a designated enoylreductase (ER) domain. The cytochrome P450 monooxygenase iccC then catalyzes the ring expansion of the tetramate to the acyclic 2-pyridone. The pericyclase iccD further converts the acyclic 2-pyridone into 8-epi-ilicicolin H. Finally, the epimerase iccE converts 8-epi-ilicicolin H into ilicicolin H via epimerization. IccA to iccE are sufficient for ilicicolin H biosynthesis and the roles of the remaining enzymes, iccF, iccG and iccH within the pathway have still to be determined. The polypeptide is NADH-dependent flavin oxidoreductase iccE (Talaromyces variabilis (Penicillium variabile)).